A 145-amino-acid chain; its full sequence is Regulator of sigma D (145 aa).

It belongs to the Rsd/AlgQ family. Interacts with RpoD.

The protein resides in the cytoplasm. Binds RpoD and negatively regulates RpoD-mediated transcription activation by preventing the interaction between the primary sigma factor RpoD with the catalytic core of the RNA polymerase and with promoter DNA. May be involved in replacement of the RNA polymerase sigma subunit from RpoD to RpoS during the transition from exponential growth to the stationary phase. The protein is Regulator of sigma D of Sodalis glossinidius (strain morsitans).